The following is a 378-amino-acid chain: Acetylornithine deacetylase (378 aa).

Residue His-76 participates in Zn(2+) binding. Residue Asp-78 is part of the active site. Asp-108 contributes to the Zn(2+) binding site. Glu-140 is an active-site residue. Zn(2+)-binding residues include Glu-141, Glu-165, and His-351.

It belongs to the peptidase M20A family. ArgE subfamily. As to quaternary structure, homodimer. The cofactor is Zn(2+). Co(2+) serves as cofactor. It depends on glutathione as a cofactor.

It is found in the cytoplasm. It carries out the reaction N(2)-acetyl-L-ornithine + H2O = L-ornithine + acetate. Its pathway is amino-acid biosynthesis; L-arginine biosynthesis; L-ornithine from N(2)-acetyl-L-ornithine (linear): step 1/1. In terms of biological role, catalyzes the hydrolysis of the amide bond of N(2)-acetylated L-amino acids. Cleaves the acetyl group from N-acetyl-L-ornithine to form L-ornithine, an intermediate in L-arginine biosynthesis pathway, and a branchpoint in the synthesis of polyamines. In Vibrio parahaemolyticus serotype O3:K6 (strain RIMD 2210633), this protein is Acetylornithine deacetylase.